The chain runs to 790 residues: B3 domain-containing transcription repressor VAL1 (790 aa).

The segment at 234-260 is disordered; sequence KPSRPAISTPPVASKSAQARIGRPPVE. A DNA-binding region (TF-B3) is located at residues 295–396; the sequence is FEKTLSASDA…KLIMGSRKAA (102 aa). Disordered stretches follow at residues 400-429 and 446-468; these read DMQG…SING and NLNS…EKKR. Positions 405 to 429 are enriched in polar residues; that stretch reads GLTNGTSTEDTSSSGVTENPPSING. The segment at 538–588 adopts a CW-type zinc-finger fold; the sequence is SGEQERWATCDDCSKWRRLPVDALLSFKWTCIDNVWDVSRCSCSAPEESLK. Positions 547, 550, 568, and 580 each coordinate Zn(2+). Residues 685 to 732 adopt a coiled-coil conformation; sequence LMMRRKKKQLERDVTAAEDKKKKDMELAESDKSKEEKEVNTARIDLNS. The interval 689–737 is disordered; that stretch reads RKKKQLERDVTAAEDKKKKDMELAESDKSKEEKEVNTARIDLNSDPYNK. Residues 694-724 are compositionally biased toward basic and acidic residues; sequence LERDVTAAEDKKKKDMELAESDKSKEEKEVN.

As to quaternary structure, interacts with SNL1. As to expression, expressed in flowers and at lower levels in roots, stems and leaves.

It localises to the nucleus. Functionally, transcriptional repressor of gene expression involved in embryonic pathways, such as LEC1, ABI3, and FUS3. Repressor of the sugar-inducible genes involved in the seed maturation program in seedlings. Plays an essential role in regulating the transition from seed maturation to seedling growth. Functionally redundant with VAL2/HSL1. The sequence is that of B3 domain-containing transcription repressor VAL1 (VAL1) from Arabidopsis thaliana (Mouse-ear cress).